The chain runs to 435 residues: Transmembrane protease serine 4 (435 aa).

Residues 1-30 are Cytoplasmic-facing; that stretch reads MESDSGQPLNNRDIVPFRKPRRPQETFKKV. The helical; Signal-anchor for type II membrane protein transmembrane segment at 31–51 threads the bilayer; sequence GIPIIAVLLSLIALVIVALLI. Topologically, residues 52-435 are extracellular; sequence KVILDKYYFI…WIYNVRKSEM (384 aa). Residues 59 to 101 form the LDL-receptor class A domain; sequence YFICGSPLTFIQRGQLCDGHLDCASGEDEEHCVKDFPEKPGVA. Intrachain disulfides connect cysteine 62/cysteine 81, cysteine 75/cysteine 90, cysteine 125/cysteine 181, cysteine 138/cysteine 191, cysteine 194/cysteine 308, cysteine 228/cysteine 244, cysteine 354/cysteine 370, and cysteine 381/cysteine 408. The SRCR domain occupies 102–202; sequence VRLSKDRSTL…DCGKSLKTPR (101 aa). N-linked (GlcNAc...) asparagine glycosylation is found at asparagine 128 and asparagine 176. A Peptidase S1 domain is found at 203–432; it reads VVGGVEAPVD…YLNWIYNVRK (230 aa). Residues histidine 243 and aspartate 288 each act as charge relay system in the active site. Serine 385 serves as the catalytic Charge relay system.

The protein belongs to the peptidase S1 family. In terms of processing, proteolytically processed; probably by an autocatalytic mechanism.

It localises to the cell membrane. The protein localises to the secreted. Plasma membrane-anchored serine protease that directly induces processing of pro-uPA/PLAU into the active form through proteolytic activity. Seems to be capable of activating ENaC. This chain is Transmembrane protease serine 4, found in Mus musculus (Mouse).